Here is a 449-residue protein sequence, read N- to C-terminus: Bifunctional protein GlmU (449 aa).

The segment at 1-225 (MLSVAILAAG…NGELQGINNR (225 aa)) is pyrophosphorylase. UDP-N-acetyl-alpha-D-glucosamine-binding positions include 7–10 (LAAG), Lys-21, Gln-73, and 78–79 (GT). Position 103 (Asp-103) interacts with Mg(2+). UDP-N-acetyl-alpha-D-glucosamine contacts are provided by Gly-140, Glu-154, Asn-169, and Asn-223. A Mg(2+)-binding site is contributed by Asn-223. Residues 226–246 (IQLSKCEEIIQNSIKEKHMLN) form a linker region. The interval 247 to 449 (GVTFINQASC…NIDNWERKKP (203 aa)) is N-acetyltransferase. UDP-N-acetyl-alpha-D-glucosamine is bound by residues Arg-328 and Lys-346. The active-site Proton acceptor is His-358. 2 residues coordinate UDP-N-acetyl-alpha-D-glucosamine: Tyr-361 and Asn-372. 3 residues coordinate acetyl-CoA: Ala-375, Ala-418, and Arg-435.

The protein in the N-terminal section; belongs to the N-acetylglucosamine-1-phosphate uridyltransferase family. It in the C-terminal section; belongs to the transferase hexapeptide repeat family. Homotrimer. Requires Mg(2+) as cofactor.

It localises to the cytoplasm. It catalyses the reaction alpha-D-glucosamine 1-phosphate + acetyl-CoA = N-acetyl-alpha-D-glucosamine 1-phosphate + CoA + H(+). The catalysed reaction is N-acetyl-alpha-D-glucosamine 1-phosphate + UTP + H(+) = UDP-N-acetyl-alpha-D-glucosamine + diphosphate. Its pathway is nucleotide-sugar biosynthesis; UDP-N-acetyl-alpha-D-glucosamine biosynthesis; N-acetyl-alpha-D-glucosamine 1-phosphate from alpha-D-glucosamine 6-phosphate (route II): step 2/2. It functions in the pathway nucleotide-sugar biosynthesis; UDP-N-acetyl-alpha-D-glucosamine biosynthesis; UDP-N-acetyl-alpha-D-glucosamine from N-acetyl-alpha-D-glucosamine 1-phosphate: step 1/1. The protein operates within bacterial outer membrane biogenesis; LPS lipid A biosynthesis. Its function is as follows. Catalyzes the last two sequential reactions in the de novo biosynthetic pathway for UDP-N-acetylglucosamine (UDP-GlcNAc). The C-terminal domain catalyzes the transfer of acetyl group from acetyl coenzyme A to glucosamine-1-phosphate (GlcN-1-P) to produce N-acetylglucosamine-1-phosphate (GlcNAc-1-P), which is converted into UDP-GlcNAc by the transfer of uridine 5-monophosphate (from uridine 5-triphosphate), a reaction catalyzed by the N-terminal domain. The chain is Bifunctional protein GlmU from Prochlorococcus marinus (strain MIT 9312).